The primary structure comprises 162 residues: Phospholipase A2 (162 aa).

Residues 1–22 (MKVLQMFFCVILLCVTSVLVEA) form the signal peptide. Residues 23 to 35 (KSTTKGDETASKR) constitute a propeptide that is removed on maturation. 6 disulfide bridges follow: C60/C155, C62/C78, C77/C134, C84/C127, C94/C120, and C113/C125. Positions 61, 63, and 65 each coordinate Ca(2+). The active site involves H81. Ca(2+) is bound at residue D82. The active site involves D128.

It belongs to the phospholipase A2 family. Group I subfamily. D49 sub-subfamily. It depends on Ca(2+) as a cofactor. In terms of tissue distribution, expressed both outside and in acontia, a specialised envenomation structure laden with batteries of venom-containing nematocysts found only in the superfamily Metridioidea.

It is found in the secreted. The protein localises to the nematocyst. It carries out the reaction a 1,2-diacyl-sn-glycero-3-phosphocholine + H2O = a 1-acyl-sn-glycero-3-phosphocholine + a fatty acid + H(+). Its function is as follows. PLA2 catalyzes the calcium-dependent hydrolysis of the 2-acyl groups in 3-sn-phosphoglycerides. This chain is Phospholipase A2, found in Calliactis polypus (Hermit crab anemone).